The chain runs to 240 residues: Eukaryotic translation initiation factor 3 subunit K (240 aa).

The 181-residue stretch at 41 to 221 (YDKDIVLTIL…TIKTRNIDEK (181 aa)) folds into the PCI domain.

This sequence belongs to the eIF-3 subunit K family. In terms of assembly, component of the eukaryotic translation initiation factor 3 (eIF-3) complex.

It is found in the cytoplasm. Its function is as follows. Component of the eukaryotic translation initiation factor 3 (eIF-3) complex, which is involved in protein synthesis of a specialized repertoire of mRNAs and, together with other initiation factors, stimulates binding of mRNA and methionyl-tRNAi to the 40S ribosome. The eIF-3 complex specifically targets and initiates translation of a subset of mRNAs involved in cell proliferation. This is Eukaryotic translation initiation factor 3 subunit K from Caenorhabditis elegans.